The chain runs to 171 residues: Peptidyl-prolyl cis-trans isomerase slr1251 (171 aa).

The 164-residue stretch at 6-169 folds into the PPIase cyclophilin-type domain; the sequence is FFDITIGSDT…QAIVISDCGE (164 aa).

It belongs to the cyclophilin-type PPIase family.

It catalyses the reaction [protein]-peptidylproline (omega=180) = [protein]-peptidylproline (omega=0). Functionally, PPIases accelerate the folding of proteins. It catalyzes the cis-trans isomerization of proline imidic peptide bonds in oligopeptides. In Synechocystis sp. (strain ATCC 27184 / PCC 6803 / Kazusa), this protein is Peptidyl-prolyl cis-trans isomerase slr1251.